A 318-amino-acid polypeptide reads, in one-letter code: Acetyl-coenzyme A carboxylase carboxyl transferase subunit alpha (318 aa).

The CoA carboxyltransferase C-terminal domain occupies 39-293; the sequence is KLEKKVDKMR…HEALARHLKE (255 aa).

The protein belongs to the AccA family. As to quaternary structure, acetyl-CoA carboxylase is a heterohexamer composed of biotin carboxyl carrier protein (AccB), biotin carboxylase (AccC) and two subunits each of ACCase subunit alpha (AccA) and ACCase subunit beta (AccD).

Its subcellular location is the cytoplasm. The catalysed reaction is N(6)-carboxybiotinyl-L-lysyl-[protein] + acetyl-CoA = N(6)-biotinyl-L-lysyl-[protein] + malonyl-CoA. The protein operates within lipid metabolism; malonyl-CoA biosynthesis; malonyl-CoA from acetyl-CoA: step 1/1. In terms of biological role, component of the acetyl coenzyme A carboxylase (ACC) complex. First, biotin carboxylase catalyzes the carboxylation of biotin on its carrier protein (BCCP) and then the CO(2) group is transferred by the carboxyltransferase to acetyl-CoA to form malonyl-CoA. This Geobacter metallireducens (strain ATCC 53774 / DSM 7210 / GS-15) protein is Acetyl-coenzyme A carboxylase carboxyl transferase subunit alpha.